We begin with the raw amino-acid sequence, 359 residues long: Histidinol-phosphate aminotransferase (359 aa).

Position 217 is an N6-(pyridoxal phosphate)lysine (K217).

It belongs to the class-II pyridoxal-phosphate-dependent aminotransferase family. Histidinol-phosphate aminotransferase subfamily. In terms of assembly, homodimer. Pyridoxal 5'-phosphate serves as cofactor.

The enzyme catalyses L-histidinol phosphate + 2-oxoglutarate = 3-(imidazol-4-yl)-2-oxopropyl phosphate + L-glutamate. Its pathway is amino-acid biosynthesis; L-histidine biosynthesis; L-histidine from 5-phospho-alpha-D-ribose 1-diphosphate: step 7/9. The protein is Histidinol-phosphate aminotransferase of Salmonella paratyphi A (strain ATCC 9150 / SARB42).